Here is an 809-residue protein sequence, read N- to C-terminus: Origin of replication complex subunit 1A (809 aa).

Residues 1–47 show a composition bias toward low complexity; it reads MASSLSSKAKTFKSPTKTPTKMYRKSYLSPSSTSLTPPQTPETLTPL. The tract at residues 1-69 is disordered; that stretch reads MASSLSSKAK…LGNDPIDLPG (69 aa). A histone H3 binding region spans residues 160–185; that stretch reads DPEIEDCQICFKSHTNTIMIECDDCL. Residues 163-213 form a PHD-type zinc finger; the sequence is IEDCQICFKSHTNTIMIECDDCLGGFHLNCLKPPLKEVPEGDWICQFCEVK. Zn(2+) contacts are provided by Cys-166, Cys-169, Cys-181, Cys-184, His-189, and Cys-192. The segment at 201-205 is histone H3 binding; that stretch reads PEGDW. Zn(2+) contacts are provided by Cys-207 and Cys-210. Positions 223–341 constitute a BAH domain; it reads PKPPEGKKLA…VHWGSFKRVA (119 aa). The histone H3 binding stretch occupies residues 316–321; the sequence is ASNDGD. The necessary and sufficient for ORC complex assembly stretch occupies residues 431–799; sequence PKSLPCRSKE…DDVAFALKDN (369 aa). Residues 466-473 and 466-474 contribute to the ATP site; these read GVPGTGKT and GVPGTGKTI. The Mg(2+) site is built by Asp-556 and Glu-557. The ATP site is built by Glu-557, Asn-590, and Arg-655.

This sequence belongs to the ORC1 family. Component of the origin recognition complex (ORC) composed of at least ORC1 (ORC1A or ORC1B), ORC2, ORC3, ORC4, ORC5 and ORC6. ORC is regulated in a cell-cycle and development dependent manner. It is sequentially assembled at the exit from anaphase of mitosis and disassembled as cells enter S phase. Interacts directly with ORC2, ORC3, ORC4 and ORC5. Binds mostly unmodified histone H3, and, with lower efficiency, H3K4me1 H3K4me2 and H3K4me3. Follow a cell-cycle regulation with a peak at the G1/S-phase. Mostly expressed in siliques, flowers and flower buds, and, to a lower extent, in roots, leaves and stems.

The protein resides in the nucleus. In terms of biological role, essential protein. Component of the origin recognition complex (ORC) that binds origins of replication. It has a role in both chromosomal replication and mating type transcriptional silencing. Binds to the ARS consensus sequence (ACS) of origins of replication. H3K4me3 effector that positively regulates the transcription of a subset of genes. This chain is Origin of replication complex subunit 1A, found in Arabidopsis thaliana (Mouse-ear cress).